The chain runs to 306 residues: Aspartate carbamoyltransferase catalytic subunit (306 aa).

2 residues coordinate carbamoyl phosphate: arginine 55 and threonine 56. Residue lysine 84 participates in L-aspartate binding. Positions 105, 133, and 136 each coordinate carbamoyl phosphate. Arginine 166 and arginine 227 together coordinate L-aspartate. Leucine 265 and proline 266 together coordinate carbamoyl phosphate.

It belongs to the aspartate/ornithine carbamoyltransferase superfamily. ATCase family. Heterododecamer (2C3:3R2) of six catalytic PyrB chains organized as two trimers (C3), and six regulatory PyrI chains organized as three dimers (R2).

It catalyses the reaction carbamoyl phosphate + L-aspartate = N-carbamoyl-L-aspartate + phosphate + H(+). The protein operates within pyrimidine metabolism; UMP biosynthesis via de novo pathway; (S)-dihydroorotate from bicarbonate: step 2/3. Functionally, catalyzes the condensation of carbamoyl phosphate and aspartate to form carbamoyl aspartate and inorganic phosphate, the committed step in the de novo pyrimidine nucleotide biosynthesis pathway. This chain is Aspartate carbamoyltransferase catalytic subunit, found in Aeromonas salmonicida (strain A449).